We begin with the raw amino-acid sequence, 101 residues long: Large ribosomal subunit protein eL21 (101 aa).

Residues 1–18 show a composition bias toward basic residues; it reads MVKHSRGYRTRSRSLLRK. The segment at 1-23 is disordered; it reads MVKHSRGYRTRSRSLLRKSPRER.

This sequence belongs to the eukaryotic ribosomal protein eL21 family.

The protein is Large ribosomal subunit protein eL21 of Saccharolobus islandicus (strain Y.G.57.14 / Yellowstone #1) (Sulfolobus islandicus).